Reading from the N-terminus, the 451-residue chain is Probable phosphoglucosamine mutase (451 aa).

The Phosphoserine intermediate role is filled by Ser-96. The Mg(2+) site is built by Ser-96, Asp-233, Asp-235, and Asp-237. Ser-96 is subject to Phosphoserine.

Belongs to the phosphohexose mutase family. The cofactor is Mg(2+). Activated by phosphorylation.

It carries out the reaction alpha-D-glucosamine 1-phosphate = D-glucosamine 6-phosphate. In terms of biological role, catalyzes the conversion of glucosamine-6-phosphate to glucosamine-1-phosphate. The sequence is that of Probable phosphoglucosamine mutase from Pyrococcus horikoshii (strain ATCC 700860 / DSM 12428 / JCM 9974 / NBRC 100139 / OT-3).